The sequence spans 249 residues: 2,5-diamino-6-ribosylamino-4(3H)-pyrimidinone 5'-phosphate reductase (249 aa).

NADP(+) is bound by residues Thr79, Asp83, Met164, and 187 to 191; that span reads GGIVI.

Belongs to the HTP reductase family. In terms of assembly, homodimer.

The enzyme catalyses 2,5-diamino-6-(1-D-ribitylamino)pyrimidin-4(3H)-one 5'-phosphate + NADP(+) = 2,5-diamino-6-(1-D-ribosylamino)pyrimidin-4(3H)-one 5'-phosphate + NADPH + H(+). The catalysed reaction is 2,5-diamino-6-(1-D-ribitylamino)pyrimidin-4(3H)-one 5'-phosphate + NAD(+) = 2,5-diamino-6-(1-D-ribosylamino)pyrimidin-4(3H)-one 5'-phosphate + NADH + H(+). Its pathway is cofactor biosynthesis; riboflavin biosynthesis. Functionally, catalyzes an early step in riboflavin biosynthesis, the NADPH-dependent reduction of the ribose side chain of 2,5-diamino-6-ribosylamino-4(3H)-pyrimidinone 5'-phosphate, yielding 2,5-diamino-6-ribitylamino-4(3H)-pyrimidinone 5'-phosphate. This Kluyveromyces marxianus (Yeast) protein is 2,5-diamino-6-ribosylamino-4(3H)-pyrimidinone 5'-phosphate reductase (RIB7).